Consider the following 606-residue polypeptide: 4-hydroxy-3-methylbut-2-en-1-yl diphosphate synthase (flavodoxin) (606 aa).

Residues C513, C516, C547, and E554 each coordinate [4Fe-4S] cluster.

Belongs to the IspG family. Requires [4Fe-4S] cluster as cofactor.

It carries out the reaction (2E)-4-hydroxy-3-methylbut-2-enyl diphosphate + oxidized [flavodoxin] + H2O + 2 H(+) = 2-C-methyl-D-erythritol 2,4-cyclic diphosphate + reduced [flavodoxin]. It functions in the pathway isoprenoid biosynthesis; isopentenyl diphosphate biosynthesis via DXP pathway; isopentenyl diphosphate from 1-deoxy-D-xylulose 5-phosphate: step 5/6. Its function is as follows. Converts 2C-methyl-D-erythritol 2,4-cyclodiphosphate (ME-2,4cPP) into 1-hydroxy-2-methyl-2-(E)-butenyl 4-diphosphate. The sequence is that of 4-hydroxy-3-methylbut-2-en-1-yl diphosphate synthase (flavodoxin) from Chlamydia felis (strain Fe/C-56) (Chlamydophila felis).